Consider the following 292-residue polypeptide: Homoserine kinase (292 aa).

An ATP-binding site is contributed by 81-91 (RPRSGLGSSGA).

This sequence belongs to the GHMP kinase family. Homoserine kinase subfamily.

The protein localises to the cytoplasm. The catalysed reaction is L-homoserine + ATP = O-phospho-L-homoserine + ADP + H(+). Its pathway is amino-acid biosynthesis; L-threonine biosynthesis; L-threonine from L-aspartate: step 4/5. Its function is as follows. Catalyzes the ATP-dependent phosphorylation of L-homoserine to L-homoserine phosphate. The chain is Homoserine kinase from Thermococcus kodakarensis (strain ATCC BAA-918 / JCM 12380 / KOD1) (Pyrococcus kodakaraensis (strain KOD1)).